A 779-amino-acid chain; its full sequence is Mesenchyme-specific cell surface glycoprotein (779 aa).

An N-terminal signal peptide occupies residues 1–15; sequence MQFGVPLLVLCLALG. N-linked (GlcNAc...) asparagine glycosylation is found at Asn203 and Asn234. The interval 249–363 is disordered; the sequence is AGFPRGTTWS…QYPMIPTTPL (115 aa). Residues 262-351 are compositionally biased toward gly residues; it reads GAGGQGGQGQ…GGQGGQGGGN (90 aa). N-linked (GlcNAc...) asparagine glycosylation is found at Asn369, Asn451, and Asn609.

As to expression, restricted to the primary mesenchyme cell lineage.

Its subcellular location is the cell membrane. Functionally, not known. Could be involved in mesenchyme cell migration, adhesion, fusion, or spicule formation. The protein is Mesenchyme-specific cell surface glycoprotein of Strongylocentrotus purpuratus (Purple sea urchin).